We begin with the raw amino-acid sequence, 373 residues long: Sorting nexin-21 (373 aa).

The segment at 1–107 (MHRGTQEGAM…RSPPPDGQWG (107 aa)) is disordered. Low complexity predominate over residues 21 to 37 (ALAGDGPGEAAASPEAE). Residues 55–65 (SRLSGTLSFTS) are compositionally biased toward polar residues. Acidic residues predominate over residues 66 to 81 (AEDDEDDEDEDDEEAG). The PX domain maps to 129–246 (QRLLFEVTSA…DFFVLPELRR (118 aa)). The a 1,2-diacyl-sn-glycero-3-phospho-(1D-myo-inositol-3-phosphate) site is built by Arg-171, Ser-173, Lys-198, and Arg-212.

Belongs to the sorting nexin family. In terms of assembly, monomer. In terms of tissue distribution, highly expressed in fetus liver, but only weakly expressed in brain, skeleton muscle, smooth muscle, and cardiac muscle, kidney, and adrenal gland.

It localises to the cytoplasmic vesicle membrane. It is found in the early endosome membrane. Binds to membranes enriched in phosphatidylinositol 3-phosphate (PtdIns(P3)) and phosphatidylinositol 4,5-bisphosphate. May be involved in several stages of intracellular trafficking. The sequence is that of Sorting nexin-21 (SNX21) from Homo sapiens (Human).